The primary structure comprises 349 residues: tRNA pseudouridine synthase D (349 aa).

Phe-26 provides a ligand contact to substrate. Asp-79 (nucleophile) is an active-site residue. A substrate-binding site is contributed by Asn-128. A TRUD domain is found at 154–302 (GVPNYFGSQR…VEGSRRAVLL (149 aa)). Residue Phe-328 coordinates substrate.

Belongs to the pseudouridine synthase TruD family.

The enzyme catalyses uridine(13) in tRNA = pseudouridine(13) in tRNA. Its function is as follows. Responsible for synthesis of pseudouridine from uracil-13 in transfer RNAs. The sequence is that of tRNA pseudouridine synthase D from Yersinia pseudotuberculosis serotype O:1b (strain IP 31758).